A 167-amino-acid chain; its full sequence is ATP synthase subunit b (167 aa).

Residues 10 to 30 form a helical membrane-spanning segment; it reads TFFFQLANTLIMFLILKHFLF.

Belongs to the ATPase B chain family. In terms of assembly, F-type ATPases have 2 components, F(1) - the catalytic core - and F(0) - the membrane proton channel. F(1) has five subunits: alpha(3), beta(3), gamma(1), delta(1), epsilon(1). F(0) has three main subunits: a(1), b(2) and c(10-14). The alpha and beta chains form an alternating ring which encloses part of the gamma chain. F(1) is attached to F(0) by a central stalk formed by the gamma and epsilon chains, while a peripheral stalk is formed by the delta and b chains.

The protein resides in the cell membrane. F(1)F(0) ATP synthase produces ATP from ADP in the presence of a proton or sodium gradient. F-type ATPases consist of two structural domains, F(1) containing the extramembraneous catalytic core and F(0) containing the membrane proton channel, linked together by a central stalk and a peripheral stalk. During catalysis, ATP synthesis in the catalytic domain of F(1) is coupled via a rotary mechanism of the central stalk subunits to proton translocation. In terms of biological role, component of the F(0) channel, it forms part of the peripheral stalk, linking F(1) to F(0). This is ATP synthase subunit b from Alkaliphilus oremlandii (strain OhILAs) (Clostridium oremlandii (strain OhILAs)).